The chain runs to 426 residues: Histidinol dehydrogenase (426 aa).

The NAD(+) site is built by Tyr-130, Gln-187, and Asn-210. 3 residues coordinate substrate: Ser-233, Gln-255, and His-258. 2 residues coordinate Zn(2+): Gln-255 and His-258. Residues Glu-323 and His-324 each act as proton acceptor in the active site. Substrate contacts are provided by His-324, Asp-357, Glu-411, and His-416. Asp-357 is a Zn(2+) binding site. His-416 serves as a coordination point for Zn(2+).

Belongs to the histidinol dehydrogenase family. Zn(2+) serves as cofactor.

The catalysed reaction is L-histidinol + 2 NAD(+) + H2O = L-histidine + 2 NADH + 3 H(+). It participates in amino-acid biosynthesis; L-histidine biosynthesis; L-histidine from 5-phospho-alpha-D-ribose 1-diphosphate: step 9/9. In terms of biological role, catalyzes the sequential NAD-dependent oxidations of L-histidinol to L-histidinaldehyde and then to L-histidine. The polypeptide is Histidinol dehydrogenase (hisD) (Aquifex aeolicus (strain VF5)).